Consider the following 377-residue polypeptide: Spermidine/putrescine import ATP-binding protein PotA (377 aa).

One can recognise an ABC transporter domain in the interval 22 to 252 (VRLQNVTKRF…PANRFVADFI (231 aa)). 54-61 (GPSGCGKT) is a binding site for ATP.

It belongs to the ABC transporter superfamily. Spermidine/putrescine importer (TC 3.A.1.11.1) family. In terms of assembly, the complex is composed of two ATP-binding proteins (PotA), two transmembrane proteins (PotB and PotC) and a solute-binding protein (PotD).

The protein localises to the cell membrane. It carries out the reaction ATP + H2O + polyamine-[polyamine-binding protein]Side 1 = ADP + phosphate + polyamineSide 2 + [polyamine-binding protein]Side 1.. Its function is as follows. Part of the ABC transporter complex PotABCD involved in spermidine/putrescine import. Responsible for energy coupling to the transport system. This Rubrobacter xylanophilus (strain DSM 9941 / JCM 11954 / NBRC 16129 / PRD-1) protein is Spermidine/putrescine import ATP-binding protein PotA.